Here is a 438-residue protein sequence, read N- to C-terminus: Transmembrane protein 184C (438 aa).

Transmembrane regions (helical) follow at residues 17-37, 48-68, 86-106, 176-196, 212-232, 254-274, and 287-307; these read LAVV…VWEL, AWFI…WVIL, ILWM…YPSI, VLQY…CELL, YLVI…LLFY, VVFV…VGVI, and AVAT…AAIA. The disordered stretch occupies residues 358–438; it reads PRKKFFPEDQ…EEPSEKPVAS (81 aa). Low complexity-rich tracts occupy residues 374–390 and 404–413; these read SLLS…ASSV and TVTPQTTPTT. Residues 426 to 438 are compositionally biased toward basic and acidic residues; it reads GVREEPSEKPVAS.

Belongs to the TMEM184 family.

Its subcellular location is the membrane. Possible tumor suppressor which may play a role in cell growth. This is Transmembrane protein 184C (TMEM184C) from Bos taurus (Bovine).